The primary structure comprises 250 residues: 5'-nucleotidase SurE (250 aa).

4 residues coordinate a divalent metal cation: aspartate 8, aspartate 9, serine 40, and asparagine 95.

It belongs to the SurE nucleotidase family. A divalent metal cation is required as a cofactor.

It localises to the cytoplasm. The enzyme catalyses a ribonucleoside 5'-phosphate + H2O = a ribonucleoside + phosphate. Nucleotidase that shows phosphatase activity on nucleoside 5'-monophosphates. The sequence is that of 5'-nucleotidase SurE from Nitratidesulfovibrio vulgaris (strain ATCC 29579 / DSM 644 / CCUG 34227 / NCIMB 8303 / VKM B-1760 / Hildenborough) (Desulfovibrio vulgaris).